The sequence spans 105 residues: UPF0473 protein SAG2089 (105 aa).

This sequence belongs to the UPF0473 family.

The protein is UPF0473 protein SAG2089 of Streptococcus agalactiae serotype V (strain ATCC BAA-611 / 2603 V/R).